The chain runs to 516 residues: 2,3-bisphosphoglycerate-independent phosphoglycerate mutase (516 aa).

Asp14 and Ser64 together coordinate Mn(2+). The active-site Phosphoserine intermediate is Ser64. Residues His125, 155-156 (RD), Arg187, Arg193, 263-266 (RPDR), and Lys337 each bind substrate. Mn(2+)-binding residues include Asp404, His408, Asp445, His446, and His464.

The protein belongs to the BPG-independent phosphoglycerate mutase family. Monomer. It depends on Mn(2+) as a cofactor.

It catalyses the reaction (2R)-2-phosphoglycerate = (2R)-3-phosphoglycerate. It participates in carbohydrate degradation; glycolysis; pyruvate from D-glyceraldehyde 3-phosphate: step 3/5. Its function is as follows. Catalyzes the interconversion of 2-phosphoglycerate and 3-phosphoglycerate. The polypeptide is 2,3-bisphosphoglycerate-independent phosphoglycerate mutase (Saccharophagus degradans (strain 2-40 / ATCC 43961 / DSM 17024)).